Reading from the N-terminus, the 129-residue chain is Small ribosomal subunit protein uS11 (129 aa).

This sequence belongs to the universal ribosomal protein uS11 family. In terms of assembly, part of the 30S ribosomal subunit. Interacts with proteins S7 and S18. Binds to IF-3.

Located on the platform of the 30S subunit, it bridges several disparate RNA helices of the 16S rRNA. Forms part of the Shine-Dalgarno cleft in the 70S ribosome. This chain is Small ribosomal subunit protein uS11, found in Caulobacter vibrioides (strain ATCC 19089 / CIP 103742 / CB 15) (Caulobacter crescentus).